The following is a 515-amino-acid chain: Vacuolar segregation protein PEP7 (515 aa).

The segment at 6 to 29 adopts a C2H2-type zinc-finger fold; the sequence is VSCPICLRKFDNLQALNAHLDVEH. A disordered region spans residues 36-58; that stretch reads DSLGSNDSRLVNGKQKKARSVDS. The segment at 72–137 adopts an FYVE-type 1; atypical zinc-finger fold; sequence KKGKSCCHTC…CCHDCFVTKP (66 aa). The Zn(2+) site is built by cysteine 78, cysteine 81, cysteine 94, cysteine 97, cysteine 102, histidine 105, cysteine 129, cysteine 132, cysteine 221, cysteine 224, cysteine 237, cysteine 240, cysteine 245, cysteine 252, cysteine 289, and cysteine 292. Residues 215–297 form an FYVE-type 2 zinc finger; that stretch reads DRSVLFCNIC…LCSHCIDMLF (83 aa).

Interacts with VPS21, VPS45, PEP3 and PEP5.

It localises to the vacuole membrane. Required for vacuole segregation and vacuole protein sorting. Possibly part of a complex which tethers the vacuole membrane to microtubules, either directly or via kinesin or dynein-like motor proteins. Probably functions in several interorganelle traffic pathways. This is Vacuolar segregation protein PEP7 (PEP7) from Saccharomyces cerevisiae (strain ATCC 204508 / S288c) (Baker's yeast).